Here is a 734-residue protein sequence, read N- to C-terminus: 1,4-alpha-glucan branching enzyme GlgB (734 aa).

Asp-413 serves as the catalytic Nucleophile. Glu-466 acts as the Proton donor in catalysis.

It belongs to the glycosyl hydrolase 13 family. GlgB subfamily. As to quaternary structure, monomer.

The enzyme catalyses Transfers a segment of a (1-&gt;4)-alpha-D-glucan chain to a primary hydroxy group in a similar glucan chain.. It participates in glycan biosynthesis; glycogen biosynthesis. In terms of biological role, catalyzes the formation of the alpha-1,6-glucosidic linkages in glycogen by scission of a 1,4-alpha-linked oligosaccharide from growing alpha-1,4-glucan chains and the subsequent attachment of the oligosaccharide to the alpha-1,6 position. The sequence is that of 1,4-alpha-glucan branching enzyme GlgB from Nitrosomonas europaea (strain ATCC 19718 / CIP 103999 / KCTC 2705 / NBRC 14298).